We begin with the raw amino-acid sequence, 144 residues long: Transcription antitermination protein NusB (144 aa).

This sequence belongs to the NusB family.

In terms of biological role, involved in transcription antitermination. Required for transcription of ribosomal RNA (rRNA) genes. Binds specifically to the boxA antiterminator sequence of the ribosomal RNA (rrn) operons. In Streptococcus thermophilus (strain CNRZ 1066), this protein is Transcription antitermination protein NusB.